Reading from the N-terminus, the 409-residue chain is Serine/threonine transporter SstT (409 aa).

The next 9 helical transmembrane spans lie at G14–S34, F48–I68, I82–F102, A141–L161, I192–G212, L216–V236, I290–L310, I322–V342, and F357–I377.

The protein belongs to the dicarboxylate/amino acid:cation symporter (DAACS) (TC 2.A.23) family.

The protein localises to the cell inner membrane. The catalysed reaction is L-serine(in) + Na(+)(in) = L-serine(out) + Na(+)(out). It carries out the reaction L-threonine(in) + Na(+)(in) = L-threonine(out) + Na(+)(out). Functionally, involved in the import of serine and threonine into the cell, with the concomitant import of sodium (symport system). This is Serine/threonine transporter SstT from Shewanella woodyi (strain ATCC 51908 / MS32).